We begin with the raw amino-acid sequence, 296 residues long: Probable 6-phosphogluconolactonase 1 (296 aa).

The protein belongs to the glucosamine/galactosamine-6-phosphate isomerase family. 6-phosphogluconolactonase subfamily.

The enzyme catalyses 6-phospho-D-glucono-1,5-lactone + H2O = 6-phospho-D-gluconate + H(+). The protein operates within carbohydrate degradation; pentose phosphate pathway; D-ribulose 5-phosphate from D-glucose 6-phosphate (oxidative stage): step 2/3. Functionally, hydrolysis of 6-phosphogluconolactone to 6-phosphogluconate. This is Probable 6-phosphogluconolactonase 1 from Oryza sativa subsp. japonica (Rice).